Reading from the N-terminus, the 376-residue chain is N-acetyldiaminopimelate deacetylase (376 aa).

Aspartate 69 is a catalytic residue. The Proton acceptor role is filled by glutamate 128.

Belongs to the peptidase M20A family. N-acetyldiaminopimelate deacetylase subfamily.

The catalysed reaction is N-acetyl-(2S,6S)-2,6-diaminopimelate + H2O = (2S,6S)-2,6-diaminopimelate + acetate. It participates in amino-acid biosynthesis; L-lysine biosynthesis via DAP pathway; LL-2,6-diaminopimelate from (S)-tetrahydrodipicolinate (acetylase route): step 3/3. Its function is as follows. Catalyzes the conversion of N-acetyl-diaminopimelate to diaminopimelate and acetate. The polypeptide is N-acetyldiaminopimelate deacetylase (Bacillus cereus (strain AH820)).